A 1018-amino-acid polypeptide reads, in one-letter code: Putative type I restriction enzyme MjaVIIIP endonuclease subunit (1018 aa).

The protein belongs to the HsdR family. In terms of assembly, the type I restriction/modification system is composed of three polypeptides R, M and S.

The enzyme catalyses Endonucleolytic cleavage of DNA to give random double-stranded fragments with terminal 5'-phosphates, ATP is simultaneously hydrolyzed.. Its function is as follows. The restriction (R) subunit of a type I restriction enzyme that recognizes 5'-GAYN(5)GTAA-3' and cleaves a random distance away. The R subunit is required for both endonuclease and ATPase activities but not for modification. After locating a non-methylated recognition site, the enzyme complex serves as a molecular motor that translocates DNA in an ATP-dependent manner until a collision occurs that triggers cleavage. The protein is Putative type I restriction enzyme MjaVIIIP endonuclease subunit of Methanocaldococcus jannaschii (strain ATCC 43067 / DSM 2661 / JAL-1 / JCM 10045 / NBRC 100440) (Methanococcus jannaschii).